We begin with the raw amino-acid sequence, 67 residues long: Spiniferin (67 aa).

A signal peptide spans 1-23; that stretch reads MKTQLAILLITLVLFQMFSQSDA. The residue at position 36 (leucine 36) is a Leucine amide. Positions 40–67 are excised as a propeptide; sequence GLNDLSDLDELFDGEISKADLDFLREIM.

It belongs to the non-disulfide-bridged peptide (NDBP) superfamily. Short antimicrobial peptide (group 4) family. In terms of tissue distribution, expressed by the venom gland.

Its subcellular location is the secreted. It is found in the target cell membrane. Functionally, alpha-helical and amphipathic peptide with weak antimicrobial activities against both Gram-positive (MIC=41 uM to &gt;82 uM) and Gram-negative (MIC&gt;82 uM) bacteria. It has extremely weak hemolytic activity against human erythrocytes. The chain is Spiniferin from Heterometrus spinifer (Asia giant forest scorpion).